Here is a 129-residue protein sequence, read N- to C-terminus: MAASSLNLLLILSLLTFISLQRSESLSDNPSLTLLPDGFDWPISHSDEFDIIDGEESFEVTEEDDGVTDRRSLYWRRTKYYISYGALSANRVPCPPRSGRSYYTHNCFRARGPVHPYSRGCSSITRCRR.

Residues 1–23 (MAASSLNLLLILSLLTFISLQRS) form the signal peptide. A propeptide spans 24-76 (ESLSDNPSLTLLPDGFDWPISHSDEFDIIDGEESFEVTEEDDGVTDRRSLYWR) (removed in mature form). Intrachain disulfides connect Cys-94/Cys-107 and Cys-121/Cys-127.

It belongs to the plant rapid alkalinization factor (RALF) family. In terms of processing, proteolytically cleaved, probably by S1P, a subtilisin-like serine protease (subtilase). In terms of tissue distribution, expressed in roots, stems and leaves.

The protein localises to the secreted. Its function is as follows. Cell signaling peptide that may regulate plant stress, growth, and development. Mediates a rapid alkalinization of extracellular space by mediating a transient increase in the cytoplasmic Ca(2+) concentration leading to a calcium-dependent signaling events through a cell surface receptor and a concomitant activation of some intracellular mitogen-activated protein kinases. The protein is Protein RALF-like 34 (RALFL34) of Arabidopsis thaliana (Mouse-ear cress).